We begin with the raw amino-acid sequence, 315 residues long: O-antigen chain rhamnosyltransferase WbaN (315 aa).

Belongs to the glycosyltransferase 2 family.

The enzyme catalyses alpha-D-galactosyl-di-trans,octa-cis-undecaprenyl diphosphate + dTDP-beta-L-rhamnose = alpha-L-rhamnosyl-(1-&gt;3)-alpha-D-galactosyl-1-diphospho-di-trans,octa-cis-undecaprenol + dTDP + H(+). It participates in bacterial outer membrane biogenesis; LPS O-antigen biosynthesis. Its function is as follows. Rhamnosyltransferase involved in the biosynthesis of the repeat unit of the lipopolysaccharide (LPS) O-antigen region. Catalyzes the addition of a rhamnose to the galactosyl-undecaprenyl diphosphate intermediate. The sequence is that of O-antigen chain rhamnosyltransferase WbaN from Salmonella anatum.